The primary structure comprises 203 residues: NADH-quinone oxidoreductase subunit C (203 aa).

It belongs to the complex I 30 kDa subunit family. NDH-1 is composed of 14 different subunits. Subunits NuoB, C, D, E, F, and G constitute the peripheral sector of the complex.

It localises to the cell inner membrane. The catalysed reaction is a quinone + NADH + 5 H(+)(in) = a quinol + NAD(+) + 4 H(+)(out). NDH-1 shuttles electrons from NADH, via FMN and iron-sulfur (Fe-S) centers, to quinones in the respiratory chain. The immediate electron acceptor for the enzyme in this species is believed to be ubiquinone. Couples the redox reaction to proton translocation (for every two electrons transferred, four hydrogen ions are translocated across the cytoplasmic membrane), and thus conserves the redox energy in a proton gradient. The protein is NADH-quinone oxidoreductase subunit C of Verminephrobacter eiseniae (strain EF01-2).